The primary structure comprises 494 residues: Catalase isozyme 2 (494 aa).

The tract at residues 1–29 (MDPCKFRPSSSFDTKTTTTNAGQPVWNDN) is disordered. Residues 8-22 (PSSSFDTKTTTTNAG) show a composition bias toward polar residues. Active-site residues include H65 and N138. Heme is bound at residue Y348.

Belongs to the catalase family. As to quaternary structure, homotetramer. Heme serves as cofactor.

It is found in the peroxisome. Its subcellular location is the glyoxysome. The catalysed reaction is 2 H2O2 = O2 + 2 H2O. Occurs in almost all aerobically respiring organisms and serves to protect cells from the toxic effects of hydrogen peroxide. The protein is Catalase isozyme 2 (CAT2) of Hordeum vulgare (Barley).